We begin with the raw amino-acid sequence, 288 residues long: Light-independent protochlorophyllide reductase iron-sulfur ATP-binding protein (288 aa).

ATP-binding positions include 10-15 (GIGKST) and K39. Position 14 (S14) interacts with Mg(2+). [4Fe-4S] cluster contacts are provided by C95 and C129. ATP contacts are provided by residues 180 to 181 (NR) and 204 to 206 (PLL).

It belongs to the NifH/BchL/ChlL family. In terms of assembly, homodimer. Protochlorophyllide reductase is composed of three subunits; ChlL, ChlN and ChlB. [4Fe-4S] cluster is required as a cofactor.

It localises to the plastid. The protein resides in the chloroplast. The enzyme catalyses chlorophyllide a + oxidized 2[4Fe-4S]-[ferredoxin] + 2 ADP + 2 phosphate = protochlorophyllide a + reduced 2[4Fe-4S]-[ferredoxin] + 2 ATP + 2 H2O. Its pathway is porphyrin-containing compound metabolism; chlorophyll biosynthesis (light-independent). In terms of biological role, component of the dark-operative protochlorophyllide reductase (DPOR) that uses Mg-ATP and reduced ferredoxin to reduce ring D of protochlorophyllide (Pchlide) to form chlorophyllide a (Chlide). This reaction is light-independent. The L component serves as a unique electron donor to the NB-component of the complex, and binds Mg-ATP. The protein is Light-independent protochlorophyllide reductase iron-sulfur ATP-binding protein of Stigeoclonium helveticum (Green alga).